The chain runs to 407 residues: MPKNVTVIGAGLAGSEATWQLAKRGIHVDLYEMRPQKETPAHETGEFAELVCTNSMRSNQLSNAVGLLKEEMRHLDSLIMKAADKTQVPAGGALAVDRDSFSKYVTDTLRGLDNVTVHEEEITEIPEDGITIIATGPLTSDALAEQIQKFSGTDSLHFFDAAAPIVAADSIDMNIVYKKSRYDRGEAAYLNCPMNKEQYENFTRELIKAETAQLHGFEKNDVFEGCMPIEVMAARGAKTMLFGPLKPVGLEDPHTGETPYAVVQLRQDNAAASMYNIVGFQTHLKYGEQKRVFSMIPGLENARFVRYGKMHRNTYMASPDVLTASYEAKKRPGLFFAGQMTGVEGYVESAGSGLVAGVNAAREALGEEPIAFPKDTALGSMANYVTTTSAKHFPPMNASLHFYLLGK.

Position 9–14 (Gly9–Gly14) interacts with FAD.

This sequence belongs to the MnmG family. TrmFO subfamily. FAD serves as cofactor.

The protein resides in the cytoplasm. It catalyses the reaction uridine(54) in tRNA + (6R)-5,10-methylene-5,6,7,8-tetrahydrofolate + NADH + H(+) = 5-methyluridine(54) in tRNA + (6S)-5,6,7,8-tetrahydrofolate + NAD(+). It carries out the reaction uridine(54) in tRNA + (6R)-5,10-methylene-5,6,7,8-tetrahydrofolate + NADPH + H(+) = 5-methyluridine(54) in tRNA + (6S)-5,6,7,8-tetrahydrofolate + NADP(+). In terms of biological role, catalyzes the folate-dependent formation of 5-methyl-uridine at position 54 (M-5-U54) in all tRNAs. This chain is Methylenetetrahydrofolate--tRNA-(uracil-5-)-methyltransferase TrmFO, found in Lactobacillus helveticus (strain DPC 4571).